We begin with the raw amino-acid sequence, 205 residues long: SREBP regulating gene protein (205 aa).

Residues 1 to 16 (MLNLAALLWRRLLRKR) are Cytoplasmic-facing. A helical membrane pass occupies residues 17-35 (WVLALVFGLSLVYFLSSTF). The Lumenal portion of the chain corresponds to 36 to 205 (KQEERAVRDR…GESPPELFPA (170 aa)). Residue Asn67 is glycosylated (N-linked (GlcNAc...) asparagine).

Belongs to the SPRING family. As to quaternary structure, interacts with SCAP. In terms of tissue distribution, ubiquitously expressed with a slightly higher expression in the liver and kidney.

It localises to the golgi apparatus membrane. Positively regulates hepatic SREBP signaling pathway by modulating the proper localization of SCAP (SREBP cleavage-activating protein) to the endoplasmic reticulum, thereby controlling the level of functional SCAP. Plays a crucial role during embryogenesis. The protein is SREBP regulating gene protein (Spring1) of Mus musculus (Mouse).